The following is a 258-amino-acid chain: Regulatory protein RecX (258 aa).

It belongs to the RecX family.

Its subcellular location is the cytoplasm. Its function is as follows. Modulates RecA activity. This is Regulatory protein RecX from Streptococcus sanguinis (strain SK36).